Reading from the N-terminus, the 200-residue chain is Recombination protein RecR (200 aa).

Residues 59–74 (CDICGNVCETSPCPVC) form a C4-type zinc finger. The region spanning 82-177 (SVICVVEEPK…KVTRLASGLP (96 aa)) is the Toprim domain.

It belongs to the RecR family.

Functionally, may play a role in DNA repair. It seems to be involved in an RecBC-independent recombinational process of DNA repair. It may act with RecF and RecO. The sequence is that of Recombination protein RecR from Bifidobacterium adolescentis (strain ATCC 15703 / DSM 20083 / NCTC 11814 / E194a).